Here is a 3096-residue protein sequence, read N- to C-terminus: Cilia- and flagella-associated protein 54 (3096 aa).

Residues 1–45 (MAAQGSPSSSPSDDSTTSGSLPELPPTSTATSRSPPESKGSSRSS) show a composition bias toward low complexity. Disordered stretches follow at residues 1 to 46 (MAAQ…RSSL) and 1248 to 1267 (SNEQEEMPEEDSSKKSLKTK).

The protein belongs to the CFAP54 family.

Its subcellular location is the cytoplasm. It is found in the cytoskeleton. It localises to the cilium axoneme. Functionally, required for assembly and function of cilia and flagella. This chain is Cilia- and flagella-associated protein 54, found in Homo sapiens (Human).